The following is a 644-amino-acid chain: Arginine--tRNA ligase (644 aa).

Residues 129-139 (ANPIHPLHLGH) carry the 'HIGH' region motif.

Belongs to the class-I aminoacyl-tRNA synthetase family.

The protein localises to the cytoplasm. It carries out the reaction tRNA(Arg) + L-arginine + ATP = L-arginyl-tRNA(Arg) + AMP + diphosphate. The protein is Arginine--tRNA ligase (argS) of Aeropyrum pernix (strain ATCC 700893 / DSM 11879 / JCM 9820 / NBRC 100138 / K1).